A 254-amino-acid chain; its full sequence is Serotonin N-acetyltransferase 1, chloroplastic (254 aa).

A chloroplast-targeting transit peptide spans 1-74; it reads MAPAASASAS…LRSGFLKSNN (74 aa). Residues 111-254 form the N-acetyltransferase domain; sequence IIFSSAGDVN…IKGMFWYPRF (144 aa).

It belongs to the acetyltransferase family. In terms of tissue distribution, expressed in roots and shoots.

The protein resides in the plastid. Its subcellular location is the chloroplast. It is found in the nucleus. The enzyme catalyses serotonin + acetyl-CoA = N-acetylserotonin + CoA + H(+). It catalyses the reaction tyramine + acetyl-CoA = N-acetyltyramine + CoA + H(+). It carries out the reaction tryptamine + acetyl-CoA = N-acetyltryptamine + CoA + H(+). The catalysed reaction is 5-methoxytryptamine + acetyl-CoA = melatonin + CoA + H(+). The protein operates within aromatic compound metabolism; melatonin biosynthesis; melatonin from serotonin: step 1/2. Functionally, catalyzes the N-acetylation of serotonin into N-acetylserotonin, the penultimate step in the synthesis of melatonin. Catalyzes in vitro the N-acetylation of tryptamine to produce N-acetyltryptamine, 5-methoxytryptamine to produce melatonin and tyramine to produce N-acetyltyramine. The protein is Serotonin N-acetyltransferase 1, chloroplastic of Oryza sativa subsp. japonica (Rice).